The primary structure comprises 161 residues: RNA pyrophosphohydrolase (161 aa).

Residues 12–154 (PYRPGVGMMI…KRKLYQAVVK (143 aa)) form the Nudix hydrolase domain. The short motif at 46 to 67 (GGIVPGETPSIAAMREMLEEIG) is the Nudix box element.

This sequence belongs to the Nudix hydrolase family. RppH subfamily. It depends on a divalent metal cation as a cofactor.

Its function is as follows. Accelerates the degradation of transcripts by removing pyrophosphate from the 5'-end of triphosphorylated RNA, leading to a more labile monophosphorylated state that can stimulate subsequent ribonuclease cleavage. The sequence is that of RNA pyrophosphohydrolase from Rickettsia africae (strain ESF-5).